The sequence spans 416 residues: 4-hydroxy-3-methylbut-2-en-1-yl diphosphate synthase (flavodoxin) (416 aa).

[4Fe-4S] cluster contacts are provided by Cys304, Cys307, Cys350, and Glu357.

This sequence belongs to the IspG family. Requires [4Fe-4S] cluster as cofactor.

The enzyme catalyses (2E)-4-hydroxy-3-methylbut-2-enyl diphosphate + oxidized [flavodoxin] + H2O + 2 H(+) = 2-C-methyl-D-erythritol 2,4-cyclic diphosphate + reduced [flavodoxin]. It functions in the pathway isoprenoid biosynthesis; isopentenyl diphosphate biosynthesis via DXP pathway; isopentenyl diphosphate from 1-deoxy-D-xylulose 5-phosphate: step 5/6. In terms of biological role, converts 2C-methyl-D-erythritol 2,4-cyclodiphosphate (ME-2,4cPP) into 1-hydroxy-2-methyl-2-(E)-butenyl 4-diphosphate. The chain is 4-hydroxy-3-methylbut-2-en-1-yl diphosphate synthase (flavodoxin) from Allorhizobium ampelinum (strain ATCC BAA-846 / DSM 112012 / S4) (Agrobacterium vitis (strain S4)).